We begin with the raw amino-acid sequence, 216 residues long: Ras-related protein YPTC6 (216 aa).

19–26 provides a ligand contact to GTP; that stretch reads GDSGVGKS. The short motif at 41–49 is the Effector region element; it reads SKSTIGVEF. GTP-binding positions include 67-71 and 125-128; these read DTAGQ and NKSD. Residues cysteine 214 and cysteine 215 are each lipidated (S-geranylgeranyl cysteine).

Belongs to the small GTPase superfamily. Rab family.

It localises to the cell membrane. This chain is Ras-related protein YPTC6 (YPTC6), found in Chlamydomonas reinhardtii (Chlamydomonas smithii).